The primary structure comprises 128 residues: Large ribosomal subunit protein bL19 (128 aa).

Belongs to the bacterial ribosomal protein bL19 family.

Its function is as follows. This protein is located at the 30S-50S ribosomal subunit interface and may play a role in the structure and function of the aminoacyl-tRNA binding site. The protein is Large ribosomal subunit protein bL19 of Ralstonia nicotianae (strain ATCC BAA-1114 / GMI1000) (Ralstonia solanacearum).